We begin with the raw amino-acid sequence, 84 residues long: Small ribosomal subunit protein uS17 (84 aa).

It belongs to the universal ribosomal protein uS17 family. As to quaternary structure, part of the 30S ribosomal subunit.

In terms of biological role, one of the primary rRNA binding proteins, it binds specifically to the 5'-end of 16S ribosomal RNA. The polypeptide is Small ribosomal subunit protein uS17 (Clostridium botulinum (strain Eklund 17B / Type B)).